The primary structure comprises 994 residues: Regulator of telomere elongation helicase 1 homolog (994 aa).

In terms of domain architecture, Helicase ATP-binding spans 15 to 324 (SKTSIKFPFE…KLIENLRTED (310 aa)). 50–57 (SPTGTGKT) contributes to the ATP binding site. [4Fe-4S] cluster contacts are provided by Cys142, Cys160, Cys169, and Cys208. The short motif at 251–254 (DEAH) is the DEAH box element. Over residues 818–831 (KIEKKEKIEPRPIK) the composition is skewed to basic and acidic residues. Positions 818 to 896 (KIEKKEKIEP…HVVSGSEPPK (79 aa)) are disordered. Residues 833-844 (DSSSSSVFSLPT) show a composition bias toward polar residues. Over residues 847–856 (DELKVKKWEQ) the composition is skewed to basic and acidic residues. Polar residues-rich tracts occupy residues 859 to 869 (DSQTNVSSSSD) and 880 to 889 (PGNSSGQHVV).

Belongs to the helicase family. RAD3/XPD subfamily.

The protein resides in the nucleus. It catalyses the reaction ATP + H2O = ADP + phosphate + H(+). In terms of biological role, a probable ATP-dependent DNA helicase implicated in DNA repair and the maintenance of genomic stability. Acts as an anti-recombinase to counteract toxic recombination and limit crossover during meiosis. Regulates meiotic recombination and crossover homeostasis by physically dissociating strand invasion events and thereby promotes noncrossover repair by meiotic synthesis dependent strand annealing (SDSA) as well as disassembly of D loop recombination intermediates. The chain is Regulator of telomere elongation helicase 1 homolog from Caenorhabditis briggsae.